Here is a 388-residue protein sequence, read N- to C-terminus: Galactokinase (388 aa).

33 to 36 (EHTD) contributes to the substrate binding site. Residues serine 67 and 124–130 (GAGLSSS) contribute to the ATP site. Positions 130 and 162 each coordinate Mg(2+). Aspartate 174 (proton acceptor) is an active-site residue. Tyrosine 224 is a substrate binding site.

It belongs to the GHMP kinase family. GalK subfamily.

It is found in the cytoplasm. The enzyme catalyses alpha-D-galactose + ATP = alpha-D-galactose 1-phosphate + ADP + H(+). The protein operates within carbohydrate metabolism; galactose metabolism. Catalyzes the transfer of the gamma-phosphate of ATP to D-galactose to form alpha-D-galactose-1-phosphate (Gal-1-P). The chain is Galactokinase from Lacticaseibacillus paracasei (strain ATCC 334 / BCRC 17002 / CCUG 31169 / CIP 107868 / KCTC 3260 / NRRL B-441) (Lactobacillus paracasei).